The following is a 220-amino-acid chain: Probable pterin-4-alpha-carbinolamine dehydratase, chloroplastic (220 aa).

A chloroplast-targeting transit peptide spans 1 to 50 (MAATSSSPPCNISASSLLLRQPSRSILKVFGLLPPVSRNNRKLGRLTVTR).

The protein belongs to the pterin-4-alpha-carbinolamine dehydratase family. In terms of assembly, interacts with SDIR1. Interacts with AIRP2. Ubiquitinated by SDIR1. Ubiquitination leads to its subsequent degradation, thus controlling abscisic acid (ABA) signaling. Ubiquitinated by AIRP2. Ubiquitination leads to its subsequent degradation, thus controlling abscisic acid (ABA) signaling during drought stress.

It localises to the plastid. The protein localises to the chloroplast. The protein resides in the cell membrane. It is found in the nucleus. The catalysed reaction is (4aS,6R)-4a-hydroxy-L-erythro-5,6,7,8-tetrahydrobiopterin = (6R)-L-erythro-6,7-dihydrobiopterin + H2O. Its function is as follows. Involved in tetrahydrobiopterin biosynthesis. Interacts with and acts downstream of the E3 ubiquitin-protein ligase SDIR1 in abscisic acid (ABA) and salt stress signaling. Regulates the expression of the bZIP transcription factor ABI5, which mediates responses to ABA during seed germination and salt stress. The SDIR1-ATP1/SDIRIP1 complex plays an important role in ABA signaling through the ubiquitination pathway. Acts downstream of AIRP2 in regulation of ABA signaling during drought stress. The sequence is that of Probable pterin-4-alpha-carbinolamine dehydratase, chloroplastic from Arabidopsis thaliana (Mouse-ear cress).